A 318-amino-acid chain; its full sequence is Methionyl-tRNA formyltransferase (318 aa).

Residue 110–113 (SLLP) participates in (6S)-5,6,7,8-tetrahydrofolate binding.

It belongs to the Fmt family.

The catalysed reaction is L-methionyl-tRNA(fMet) + (6R)-10-formyltetrahydrofolate = N-formyl-L-methionyl-tRNA(fMet) + (6S)-5,6,7,8-tetrahydrofolate + H(+). Its function is as follows. Attaches a formyl group to the free amino group of methionyl-tRNA(fMet). The formyl group appears to play a dual role in the initiator identity of N-formylmethionyl-tRNA by promoting its recognition by IF2 and preventing the misappropriation of this tRNA by the elongation apparatus. This chain is Methionyl-tRNA formyltransferase, found in Lacticaseibacillus paracasei (strain ATCC 334 / BCRC 17002 / CCUG 31169 / CIP 107868 / KCTC 3260 / NRRL B-441) (Lactobacillus paracasei).